The chain runs to 482 residues: 2-succinylbenzoate--CoA ligase (482 aa).

Belongs to the ATP-dependent AMP-binding enzyme family. MenE subfamily.

The enzyme catalyses 2-succinylbenzoate + ATP + CoA = 2-succinylbenzoyl-CoA + AMP + diphosphate. Its pathway is quinol/quinone metabolism; 1,4-dihydroxy-2-naphthoate biosynthesis; 1,4-dihydroxy-2-naphthoate from chorismate: step 5/7. It participates in quinol/quinone metabolism; menaquinone biosynthesis. Functionally, converts 2-succinylbenzoate (OSB) to 2-succinylbenzoyl-CoA (OSB-CoA). In Bacillus thuringiensis subsp. konkukian (strain 97-27), this protein is 2-succinylbenzoate--CoA ligase.